Consider the following 364-residue polypeptide: Phosphoserine aminotransferase (364 aa).

An L-glutamate-binding site is contributed by Arg-41. Pyridoxal 5'-phosphate contacts are provided by residues 75 to 76 (AS), Trp-100, Thr-155, Asp-175, and Gln-198. Lys-199 is subject to N6-(pyridoxal phosphate)lysine. 239–240 (NT) is a binding site for pyridoxal 5'-phosphate.

The protein belongs to the class-V pyridoxal-phosphate-dependent aminotransferase family. SerC subfamily. Homodimer. It depends on pyridoxal 5'-phosphate as a cofactor.

Its subcellular location is the cytoplasm. It catalyses the reaction O-phospho-L-serine + 2-oxoglutarate = 3-phosphooxypyruvate + L-glutamate. It carries out the reaction 4-(phosphooxy)-L-threonine + 2-oxoglutarate = (R)-3-hydroxy-2-oxo-4-phosphooxybutanoate + L-glutamate. It participates in amino-acid biosynthesis; L-serine biosynthesis; L-serine from 3-phospho-D-glycerate: step 2/3. Its function is as follows. Catalyzes the reversible conversion of 3-phosphohydroxypyruvate to phosphoserine and of 3-hydroxy-2-oxo-4-phosphonooxybutanoate to phosphohydroxythreonine. The protein is Phosphoserine aminotransferase of Streptococcus uberis (strain ATCC BAA-854 / 0140J).